The chain runs to 344 residues: Phosphate acyltransferase (344 aa).

It belongs to the PlsX family. Homodimer. Probably interacts with PlsY.

The protein localises to the cytoplasm. It catalyses the reaction a fatty acyl-[ACP] + phosphate = an acyl phosphate + holo-[ACP]. Its pathway is lipid metabolism; phospholipid metabolism. Functionally, catalyzes the reversible formation of acyl-phosphate (acyl-PO(4)) from acyl-[acyl-carrier-protein] (acyl-ACP). This enzyme utilizes acyl-ACP as fatty acyl donor, but not acyl-CoA. The protein is Phosphate acyltransferase of Enterobacter sp. (strain 638).